A 610-amino-acid polypeptide reads, in one-letter code: UvrABC system protein C (610 aa).

Residues 13 to 92 (TLPGVYLMKN…IKQHKPRYNA (80 aa)) enclose the GIY-YIG domain. Residues 204 to 239 (KDVLKDLYEEMRLLSEQLEFEKANHLLRTIRYIEKT) enclose the UVR domain.

This sequence belongs to the UvrC family. Interacts with UvrB in an incision complex.

The protein resides in the cytoplasm. Functionally, the UvrABC repair system catalyzes the recognition and processing of DNA lesions. UvrC both incises the 5' and 3' sides of the lesion. The N-terminal half is responsible for the 3' incision and the C-terminal half is responsible for the 5' incision. This chain is UvrABC system protein C, found in Protochlamydia amoebophila (strain UWE25).